We begin with the raw amino-acid sequence, 322 residues long: MFEIHPVKKVSVVIPVYNEQESLPELIRRTTTACESLGKEYEILLIDDGSSDNSAHMLVEASQAENSHIVSILLNRNYGQHSAIMAGFSHVTGDLIITLDADLQNPPEEIPRLVAKADEGYDVVGTVRQNRQDSWFRKTASKMINRLIQRTTGKAMGDYGCMLRAYRRHIVDAMLHCHERSTFIPILANIFARRAIEIPVHHAEREFGESKYSFMRLINLMYDLVTCLTTTPLRMLSLLGSIIAIGGFSIAVLLVILRLTFGPQWAAEGVFMLFAVLFTFIGAQFIGMGLLGEYIGRIYTDVRARPRYFVQQVIRPSSKENE.

Over 1–235 (MFEIHPVKKV…TCLTTTPLRM (235 aa)) the chain is Cytoplasmic. Residues 236 to 256 (LSLLGSIIAIGGFSIAVLLVI) form a helical membrane-spanning segment. Over 257-269 (LRLTFGPQWAAEG) the chain is Periplasmic. A helical membrane pass occupies residues 270-290 (VFMLFAVLFTFIGAQFIGMGL). Topologically, residues 291-322 (LGEYIGRIYTDVRARPRYFVQQVIRPSSKENE) are cytoplasmic.

This sequence belongs to the glycosyltransferase 2 family.

It is found in the cell inner membrane. It carries out the reaction UDP-4-deoxy-4-formamido-beta-L-arabinose + di-trans,octa-cis-undecaprenyl phosphate = 4-deoxy-4-formamido-alpha-L-arabinopyranosyl di-trans,octa-cis-undecaprenyl phosphate + UDP. Its pathway is glycolipid biosynthesis; 4-amino-4-deoxy-alpha-L-arabinose undecaprenyl phosphate biosynthesis; 4-amino-4-deoxy-alpha-L-arabinose undecaprenyl phosphate from UDP-4-deoxy-4-formamido-beta-L-arabinose and undecaprenyl phosphate: step 1/2. It participates in bacterial outer membrane biogenesis; lipopolysaccharide biosynthesis. Catalyzes the transfer of 4-deoxy-4-formamido-L-arabinose from UDP to undecaprenyl phosphate. The modified arabinose is attached to lipid A and is required for resistance to polymyxin and cationic antimicrobial peptides. The sequence is that of Undecaprenyl-phosphate 4-deoxy-4-formamido-L-arabinose transferase from Shigella sonnei (strain Ss046).